Reading from the N-terminus, the 498-residue chain is ATP synthase subunit beta, chloroplastic (498 aa).

172-179 (GGAGVGKT) serves as a coordination point for ATP.

The protein belongs to the ATPase alpha/beta chains family. As to quaternary structure, F-type ATPases have 2 components, CF(1) - the catalytic core - and CF(0) - the membrane proton channel. CF(1) has five subunits: alpha(3), beta(3), gamma(1), delta(1), epsilon(1). CF(0) has four main subunits: a(1), b(1), b'(1) and c(9-12).

The protein resides in the plastid. Its subcellular location is the chloroplast thylakoid membrane. It carries out the reaction ATP + H2O + 4 H(+)(in) = ADP + phosphate + 5 H(+)(out). Its function is as follows. Produces ATP from ADP in the presence of a proton gradient across the membrane. The catalytic sites are hosted primarily by the beta subunits. This chain is ATP synthase subunit beta, chloroplastic, found in Morus indica (Mulberry).